The chain runs to 475 residues: Ribulose bisphosphate carboxylase large chain (475 aa).

Positions 1–2 are excised as a propeptide; sequence MS. N-acetylproline is present on P3. N6,N6,N6-trimethyllysine is present on K14. The substrate site is built by N123 and T173. K175 functions as the Proton acceptor in the catalytic mechanism. A substrate-binding site is contributed by K177. K201, D203, and E204 together coordinate Mg(2+). Residue K201 is modified to N6-carboxylysine. Residue H294 is the Proton acceptor of the active site. Residues R295, H327, and S379 each contribute to the substrate site.

Belongs to the RuBisCO large chain family. Type I subfamily. In terms of assembly, heterohexadecamer of 8 large chains and 8 small chains. It depends on Mg(2+) as a cofactor.

Its subcellular location is the plastid. It localises to the chloroplast. It catalyses the reaction 2 (2R)-3-phosphoglycerate + 2 H(+) = D-ribulose 1,5-bisphosphate + CO2 + H2O. The catalysed reaction is D-ribulose 1,5-bisphosphate + O2 = 2-phosphoglycolate + (2R)-3-phosphoglycerate + 2 H(+). RuBisCO catalyzes two reactions: the carboxylation of D-ribulose 1,5-bisphosphate, the primary event in carbon dioxide fixation, as well as the oxidative fragmentation of the pentose substrate in the photorespiration process. Both reactions occur simultaneously and in competition at the same active site. This is Ribulose bisphosphate carboxylase large chain from Bazzania trilobata (Greater whipwort).